Reading from the N-terminus, the 250-residue chain is Cell division protein ZapD (250 aa).

The protein belongs to the ZapD family. In terms of assembly, interacts with FtsZ.

It is found in the cytoplasm. Cell division factor that enhances FtsZ-ring assembly. Directly interacts with FtsZ and promotes bundling of FtsZ protofilaments, with a reduction in FtsZ GTPase activity. In Photorhabdus laumondii subsp. laumondii (strain DSM 15139 / CIP 105565 / TT01) (Photorhabdus luminescens subsp. laumondii), this protein is Cell division protein ZapD.